The chain runs to 243 residues: MIQLQKPKLILENGLRTDGRKLDELRPIKIELGVLKNADGSAIFEMGNTKVIAAVYGPKEMHPRHLALPDKASLRVRYHMTPFSTDERKNPAPSRREIELSKVIREALESTILLNLFPRTVIDIFMEVLQADAGTRLVALMAASMALADAGIPMRDLIAGVAVGKADGSLVLDLNEQEDMWGEADMPIAVLPSLGQVVLLQLNGFMTPDEFRRAFELAQKGISSIYALQKEALKNKYLEYKEE.

Belongs to the RNase PH family. Rrp41 subfamily. As to quaternary structure, component of the archaeal exosome complex. Forms a hexameric ring-like arrangement composed of 3 Rrp41-Rrp42 heterodimers. The hexameric ring associates with a trimer of Rrp4 and/or Csl4 subunits.

It is found in the cytoplasm. Its function is as follows. Catalytic component of the exosome, which is a complex involved in RNA degradation. Has 3'-&gt;5' exoribonuclease activity. Can also synthesize heteromeric RNA-tails. The chain is Exosome complex component Rrp41 from Sulfolobus acidocaldarius (strain ATCC 33909 / DSM 639 / JCM 8929 / NBRC 15157 / NCIMB 11770).